Reading from the N-terminus, the 635-residue chain is MINIKFPDGSIREFESGVNSLQIAKSISPSLAKITVGAYIDNKLSDAKDVINHDCELRLITTKDTEGLEILRHSCAHLLANAVKELYPNTEVTIGPVIDNGFYYDFSFKETIGEADLANIEKRMKEIAKKGSSISYKVVSKEDAIAFFKAQGENYKVDIIESIPADQQIKIYTQGDFSDLCRGPHVPSTAAIKAFKLTKLAGAYWRGDSNNEMLTRIYGTCWATKEDLDQYLHMLEEAEKRDHRKIGKALDLFHFQEDSPGIAFWHDNGVRIWREVEDYMRASNKKYGCGEIRTPLIADFSLWEKSGHASKYAENMFATKSENRDFAIRPMNCPTCVQVYNTKLHSYRDLPIRMAEFGIVHRNEPSGSLHGLMRVRSFTQDDGHIFCAPEQVEEEVILMVKQCFEVYKDFGFNDFTVKIALRPENRIGNDETWDKSEQMLKNALDANNVAYELLPGEGAFYGPKIEFHLKDAIGRSWQCGTIQLDFSMPDRLGATYIDKNGNKQVPVMLHRAIVGSLERFIGMLIEHYAGNMPLWLTPVQVAVMGISNHQDEYCQKVFETLEKNGIRAKLDLRNEKIGFKIREHTLLRVPYLVILGKSEQEQEIVTVRKHNGEDLGQMSIGDFCAFLNEQIEAKK.

A TGS domain is found at 1–61 (MINIKFPDGS…NHDCELRLIT (61 aa)). Positions 242–533 (DHRKIGKALD…LIEHYAGNMP (292 aa)) are catalytic. 3 residues coordinate Zn(2+): Cys-333, His-384, and His-510.

It belongs to the class-II aminoacyl-tRNA synthetase family. In terms of assembly, homodimer. Zn(2+) is required as a cofactor.

It localises to the cytoplasm. The enzyme catalyses tRNA(Thr) + L-threonine + ATP = L-threonyl-tRNA(Thr) + AMP + diphosphate + H(+). Functionally, catalyzes the attachment of threonine to tRNA(Thr) in a two-step reaction: L-threonine is first activated by ATP to form Thr-AMP and then transferred to the acceptor end of tRNA(Thr). Also edits incorrectly charged L-seryl-tRNA(Thr). In Francisella philomiragia subsp. philomiragia (strain ATCC 25017 / CCUG 19701 / FSC 153 / O#319-036), this protein is Threonine--tRNA ligase.